A 391-amino-acid polypeptide reads, in one-letter code: MSLNPKDVVIVDAVRTPMGKSRNGQFRHVRAEKLSAQLIQALMARNPNWDIQLTEDVIWGCVNQTKEQGMNIARNISMLAGLPRTSAAQTVNRLCGSSMQALHSASQSIMTGNGDVFVIGGVEHMGHVAMDHGIDLNPEMSKVTAKASNMMGLTAEMLGKMHGITREQQDAFGVRSHKLAWEATQQGRWDNEIVPIEGHDQNGHKVLCEIDEVIRPGASIEDMQKLRPVFDPANGTVTAGTSSALSDGASAMLVMSAERAQALGLKPRAKIRSMAVAGCDAAIMGYGPVPATQKALARAGLTIDDIDYVELNEAFAAQSLPVAKDLKLLDKMEEKVNLNGGAIALGHPLGCSGARITGTLLNVMEWKDGQIGLATMCIGLGQGIATIIERV.

C95 serves as the catalytic Acyl-thioester intermediate. Catalysis depends on proton acceptor residues H347 and C377.

Belongs to the thiolase-like superfamily. Thiolase family. Heterotetramer of two alpha chains (FadB) and two beta chains (FadA).

The protein resides in the cytoplasm. It catalyses the reaction an acyl-CoA + acetyl-CoA = a 3-oxoacyl-CoA + CoA. Its pathway is lipid metabolism; fatty acid beta-oxidation. In terms of biological role, catalyzes the final step of fatty acid oxidation in which acetyl-CoA is released and the CoA ester of a fatty acid two carbons shorter is formed. The chain is 3-ketoacyl-CoA thiolase from Alcanivorax borkumensis (strain ATCC 700651 / DSM 11573 / NCIMB 13689 / SK2).